The primary structure comprises 336 residues: Cell division protein ZipA (336 aa).

Residues 1 to 2 (ME) are Periplasmic-facing. Residues 3-23 (LHILFFILAGLLIAVLISFSL) traverse the membrane as a helical segment. Topologically, residues 24–336 (WSARREKSRI…SRQSYLARVS (313 aa)) are cytoplasmic. The disordered stretch occupies residues 56–77 (PSLNPQSYAQTTGQHGETEADN). Residues 59–70 (NPQSYAQTTGQH) show a composition bias toward polar residues.

The protein belongs to the ZipA family. Interacts with FtsZ via their C-terminal domains.

It is found in the cell inner membrane. In terms of biological role, essential cell division protein that stabilizes the FtsZ protofilaments by cross-linking them and that serves as a cytoplasmic membrane anchor for the Z ring. Also required for the recruitment to the septal ring of downstream cell division proteins. The sequence is that of Cell division protein ZipA from Actinobacillus pleuropneumoniae serotype 3 (strain JL03).